We begin with the raw amino-acid sequence, 360 residues long: Vitopine synthase (360 aa).

The protein belongs to the lysopine/nopaline/octopine/opine/vitopine dehydrogenases family.

This Allorhizobium ampelinum (strain ATCC BAA-846 / DSM 112012 / S4) (Agrobacterium vitis (strain S4)) protein is Vitopine synthase (vis).